Here is a 283-residue protein sequence, read N- to C-terminus: Polyamine aminopropyltransferase (283 aa).

The 236-residue stretch at 2-237 (ELWYTEEHTD…GHWLFGFASK (236 aa)) folds into the PABS domain. Q31 serves as a coordination point for S-methyl-5'-thioadenosine. Residues H62 and D86 each coordinate spermidine. S-methyl-5'-thioadenosine contacts are provided by residues E106 and 137–138 (DG). The active-site Proton acceptor is the D155. 155–158 (DSTD) is a binding site for spermidine. P162 contributes to the S-methyl-5'-thioadenosine binding site.

Belongs to the spermidine/spermine synthase family. In terms of assembly, homodimer or homotetramer.

Its subcellular location is the cytoplasm. The catalysed reaction is S-adenosyl 3-(methylsulfanyl)propylamine + putrescine = S-methyl-5'-thioadenosine + spermidine + H(+). Its pathway is amine and polyamine biosynthesis; spermidine biosynthesis; spermidine from putrescine: step 1/1. In terms of biological role, catalyzes the irreversible transfer of a propylamine group from the amino donor S-adenosylmethioninamine (decarboxy-AdoMet) to putrescine (1,4-diaminobutane) to yield spermidine. The protein is Polyamine aminopropyltransferase of Clostridium perfringens (strain ATCC 13124 / DSM 756 / JCM 1290 / NCIMB 6125 / NCTC 8237 / Type A).